Reading from the N-terminus, the 937-residue chain is Calsyntenin-2 (937 aa).

The first 22 residues, 1-22, serve as a signal peptide directing secretion; the sequence is MKMRAITAMLLLVLSGQCGILA. Over 23-818 the chain is Extracellular; the sequence is GKVNKHKPWI…NSDHISGTPP (796 aa). Cadherin domains are found at residues 32–148 and 149–249; these read IETS…SPVF and REPL…KPGW. Asparagine 86 is a glycosylation site (N-linked (GlcNAc...) asparagine). Residues asparagine 330, asparagine 365, and asparagine 716 are each glycosylated (N-linked (GlcNAc...) asparagine). The chain crosses the membrane as a helical span at residues 819–839; it reads AATVVIVMCIAALVVIVVLGI. Residues 840 to 937 are Cytoplasmic-facing; that stretch reads YRIHTTHQDS…LEWDPSTLPY (98 aa). The disordered stretch occupies residues 846 to 937; the sequence is HQDSSKEDEE…LEWDPSTLPY (92 aa). The segment covering 865–874 has biased composition (polar residues); the sequence is DNSNLNSIEG. 2 stretches are compositionally biased toward acidic residues: residues 881 to 900 and 907 to 917; these read VREE…DDLA and ESEDSDEDEET.

Belongs to the calsyntenin family. Homooligomer and heterooligomer; mediates both homophilic and heterophilc interactions with clstn1 and clstn3 paralogs via cadherin domains. In terms of tissue distribution, by 48 hours post-fertilization (hpf), widely expressed in the brain, with strong expression in the telencephalon and the midbrain.

It localises to the postsynaptic cell membrane. It is found in the endoplasmic reticulum membrane. The protein localises to the golgi apparatus membrane. The protein resides in the cell projection. Its subcellular location is the dendrite. Postsynaptic adhesion molecule. Promotes synapse development by acting as a cell adhesion molecule at the postsynaptic membrane, which associates with presynaptic neurexins. The polypeptide is Calsyntenin-2 (clstn2a) (Danio rerio (Zebrafish)).